The following is a 155-amino-acid chain: Pathogenesis-related protein STH-2 (155 aa).

It belongs to the BetVI family.

This chain is Pathogenesis-related protein STH-2 (STH-2), found in Solanum tuberosum (Potato).